A 472-amino-acid chain; its full sequence is Carboxypeptidase Q (472 aa).

The first 20 residues, 1–20 (MKFLIFAFFGGVHLLSLCSG), serve as a signal peptide directing secretion. Residues 21–44 (KAICKNGISKRTFEEIKEEIASCG) constitute a propeptide that is removed on maturation. N61 and N179 each carry an N-linked (GlcNAc...) asparagine glycan. Zn(2+) contacts are provided by H290 and D302. E336 acts as the Nucleophile in catalysis. Position 337 (E337) interacts with Zn(2+). N353 and N356 each carry an N-linked (GlcNAc...) asparagine glycan. D364 contacts Zn(2+). N396 carries an N-linked (GlcNAc...) asparagine glycan. H434 lines the Zn(2+) pocket.

It belongs to the peptidase M28 family. Homodimer. The monomeric form is inactive while the homodimer is active. N-glycosylated. The secreted form is modified by hybrid or complex type oligosaccharide chains. As to expression, mainly detected in blood plasma. Abundant in placenta and kidney. Present at low level in muscles, liver and skin fibroblasts. Not detected in brain or white blood cells (at protein level).

It is found in the endoplasmic reticulum. Its subcellular location is the golgi apparatus. The protein localises to the lysosome. The protein resides in the secreted. In terms of biological role, carboxypeptidase that may play an important role in the hydrolysis of circulating peptides. Catalyzes the hydrolysis of dipeptides with unsubstituted terminals into amino acids. May play a role in the liberation of thyroxine hormone from its thyroglobulin (Tg) precursor. In Homo sapiens (Human), this protein is Carboxypeptidase Q (CPQ).